The sequence spans 270 residues: MSDLHNESIFITGGGSGLGLALVERFIEEGAQVATLELSAAKVASLRQRFGEHILAVEGNVTCYADYQRAVDQILTRSGKLDCFIGNAGIWDHNASLVNTPAETLETGFHELFNVNVLGYLLGAKACAPALISSEGSMIFTLSNAAWYPGGGGPLYTASKHAATGLIRQLAYELAPKVRVNGVGPCGMASDLRGPQALGQSETSIMQSLTPEKIAAILPLQFFPQPADFTGPYVMLASRRNNRALSGVMINADAGLAIRGIRHVAAGLDL.

An NAD(+)-binding site is contributed by 10–34 (FITGGGSGLGLALVERFIEEGAQVA). Residue Ser143 participates in substrate binding. The Proton acceptor role is filled by Tyr156.

The protein belongs to the short-chain dehydrogenases/reductases (SDR) family.

It carries out the reaction 3-(cis-5,6-dihydroxycyclohexa-1,3-dien-1-yl)propanoate + NAD(+) = 3-(2,3-dihydroxyphenyl)propanoate + NADH + H(+). The enzyme catalyses (2E)-3-(cis-5,6-dihydroxycyclohexa-1,3-dien-1-yl)prop-2-enoate + NAD(+) = (2E)-3-(2,3-dihydroxyphenyl)prop-2-enoate + NADH + H(+). Its pathway is aromatic compound metabolism; 3-phenylpropanoate degradation. Converts 3-phenylpropionate-dihydrodiol (PP-dihydrodiol) and cinnamic acid-dihydrodiol (CI-dihydrodiol) into 3-(2,3-dihydroxylphenyl)propanoic acid (DHPP) and 2,3-dihydroxicinnamic acid (DHCI), respectively. The protein is 3-phenylpropionate-dihydrodiol/cinnamic acid-dihydrodiol dehydrogenase of Escherichia coli O8 (strain IAI1).